The sequence spans 90 residues: Cytochrome c7 (90 aa).

The first 20 residues, 1 to 20 (MKRIIASLALSVFCAGLAFA), serve as a signal peptide directing secretion. Residues His-37, His-40, Cys-47, Cys-50, His-51, His-67, Cys-70, Cys-73, His-74, Cys-84, Cys-87, and His-88 each contribute to the heme site.

In terms of processing, binds 3 heme groups per subunit.

Its function is as follows. May be involved in anaerobic iron respiration. This Geobacter metallireducens (strain ATCC 53774 / DSM 7210 / GS-15) protein is Cytochrome c7.